The sequence spans 661 residues: UvrABC system protein B (661 aa).

A Helicase ATP-binding domain is found at 25 to 182; the sequence is AGLSSKKRSQ…NDLINLQYER (158 aa). 38 to 45 contacts ATP; it reads GITGSGKT. Residues 91 to 114 carry the Beta-hairpin motif; it reads YYDYYQPEAYIARTDTFIEKDSSI. Residues 430–592 enclose the Helicase C-terminal domain; the sequence is QIEDLISEIQ…IIPKTINRTI (163 aa). The region spanning 621 to 656 is the UVR domain; that stretch reads KTHIDKLKKEMLKAASNLEFEQAAKLRDQLKTLEEA.

Belongs to the UvrB family. Forms a heterotetramer with UvrA during the search for lesions. Interacts with UvrC in an incision complex.

It is found in the cytoplasm. In terms of biological role, the UvrABC repair system catalyzes the recognition and processing of DNA lesions. A damage recognition complex composed of 2 UvrA and 2 UvrB subunits scans DNA for abnormalities. Upon binding of the UvrA(2)B(2) complex to a putative damaged site, the DNA wraps around one UvrB monomer. DNA wrap is dependent on ATP binding by UvrB and probably causes local melting of the DNA helix, facilitating insertion of UvrB beta-hairpin between the DNA strands. Then UvrB probes one DNA strand for the presence of a lesion. If a lesion is found the UvrA subunits dissociate and the UvrB-DNA preincision complex is formed. This complex is subsequently bound by UvrC and the second UvrB is released. If no lesion is found, the DNA wraps around the other UvrB subunit that will check the other stand for damage. The sequence is that of UvrABC system protein B from Rickettsia massiliae (strain Mtu5).